The sequence spans 815 residues: Probable beta-glucosidase G (815 aa).

Residues 1-20 (MASIAHLVVSGLLAATAVNG) form the signal peptide. N-linked (GlcNAc...) asparagine glycosylation is found at asparagine 40, asparagine 58, asparagine 229, and asparagine 276. Residue aspartate 304 is part of the active site. Asparagine 343, asparagine 350, asparagine 402, asparagine 507, asparagine 563, asparagine 584, asparagine 623, asparagine 662, and asparagine 715 each carry an N-linked (GlcNAc...) asparagine glycan.

The protein belongs to the glycosyl hydrolase 3 family.

The protein resides in the secreted. It catalyses the reaction Hydrolysis of terminal, non-reducing beta-D-glucosyl residues with release of beta-D-glucose.. It participates in glycan metabolism; cellulose degradation. Its function is as follows. Beta-glucosidases are one of a number of cellulolytic enzymes involved in the degradation of cellulosic biomass. Catalyzes the last step releasing glucose from the inhibitory cellobiose. This Aspergillus flavus (strain ATCC 200026 / FGSC A1120 / IAM 13836 / NRRL 3357 / JCM 12722 / SRRC 167) protein is Probable beta-glucosidase G (bglG).